A 327-amino-acid chain; its full sequence is Protein hunchback (327 aa).

3 consecutive C2H2-type zinc fingers follow at residues 1 to 5 (HMRNH), 11 to 33 (FQCS…LKSH), and 39 to 63 (YRCA…KYQH). Disordered regions lie at residues 91-121 (KQKP…HPIF), 143-170 (PPNN…MSPP), and 182-290 (ERPL…EVAS). 2 stretches are compositionally biased toward basic and acidic residues: residues 205-216 (THREMPTEHGDD) and 265-276 (LQHEDEKMRDAD). 2 C2H2-type zinc fingers span residues 297–319 (YTCQ…MGFH) and 325–327 (FMC).

It belongs to the hunchback C2H2-type zinc-finger protein family.

The protein resides in the nucleus. Its function is as follows. Gap class segmentation protein that controls development of head structures. The protein is Protein hunchback (hb) of Manduca sexta (Tobacco hawkmoth).